The chain runs to 309 residues: Electron transfer flavoprotein subunit alpha (309 aa).

253–281 (LYIAVGISGAIQHLAGMKDSKVIVAINKD) is a binding site for FAD.

The protein belongs to the ETF alpha-subunit/FixB family. In terms of assembly, heterodimer of an alpha and a beta subunit. FAD is required as a cofactor.

The electron transfer flavoprotein serves as a specific electron acceptor for other dehydrogenases. It transfers the electrons to the main respiratory chain via ETF-ubiquinone oxidoreductase (ETF dehydrogenase). The protein is Electron transfer flavoprotein subunit alpha (etfA) of Pseudomonas aeruginosa (strain ATCC 15692 / DSM 22644 / CIP 104116 / JCM 14847 / LMG 12228 / 1C / PRS 101 / PAO1).